A 265-amino-acid chain; its full sequence is uncharacterized protein (265 aa).

Residues His-7, His-9, Glu-95, His-131, His-156, and Asp-206 each contribute to the a divalent metal cation site.

Belongs to the metallo-dependent hydrolases superfamily. TatD-type hydrolase family. Requires a divalent metal cation as cofactor.

This is an uncharacterized protein from Buchnera aphidicola subsp. Baizongia pistaciae (strain Bp).